Here is a 94-residue protein sequence, read N- to C-terminus: Putative septation protein SpoVG (94 aa).

This sequence belongs to the SpoVG family.

In terms of biological role, could be involved in septation. This is Putative septation protein SpoVG from Acetivibrio thermocellus (strain ATCC 27405 / DSM 1237 / JCM 9322 / NBRC 103400 / NCIMB 10682 / NRRL B-4536 / VPI 7372) (Clostridium thermocellum).